Consider the following 60-residue polypeptide: LKCNKLIPLAYKTCPAGKDLCYKMYMVSDKTVPVKRGCIDVCPKNSLLVKYECCNTDRCN.

4 cysteine pairs are disulfide-bonded: C3/C21, C14/C38, C42/C53, and C54/C59.

It belongs to the three-finger toxin family. Short-chain subfamily. Type IA cytotoxin sub-subfamily. As to quaternary structure, monomer in solution; Homodimer and oligomer in the presence of negatively charged lipids forming a pore with a size ranging between 20 and 30 Angstroms. As to expression, expressed by the venom gland.

Its subcellular location is the secreted. The protein resides in the target cell membrane. In terms of biological role, shows cytolytic activity on many different cells by forming pore in lipid membranes. In vivo, increases heart rate or kills the animal by cardiac arrest. In addition, it binds to heparin with high affinity, interacts with Kv channel-interacting protein 1 (KCNIP1) in a calcium-independent manner, and binds to integrin alpha-V/beta-3 (ITGAV/ITGB3) with moderate affinity. Has hemolytic activity towards human erythrocytes (EC(50)=0.074 uM) and cytolytic activity towards various cell lines. The protein is Cytotoxin 8 of Naja naja (Indian cobra).